A 440-amino-acid polypeptide reads, in one-letter code: Putative short-chain fatty acid transporter (440 aa).

Over 1 to 19 (MIGRISRFMTRFVSRWLPD) the chain is Periplasmic. The chain crosses the membrane as a helical span at residues 20 to 40 (PLIFAMLLTLLTFVIALWLTP). Topologically, residues 41–53 (QTPISMVKMWGDG) are cytoplasmic. Residues 54 to 74 (FWNLLAFGMQMALIIVTGHAL) form a helical membrane-spanning segment. The Periplasmic segment spans residues 75–102 (ASSAPVKSLLRTAASAAKTPVQGVMLVT). Residues 103–123 (FFGSVACVINWGFGLVVGAMF) form a helical membrane-spanning segment. Over 124-137 (AREVARRVPGSDYP) the chain is Cytoplasmic. Transmembrane regions (helical) follow at residues 138-158 (LLIACAYIGFLTWGGGFSGSM) and 159-179 (PLLAATPGNPVEHIAGLIPVG). A topological domain (cytoplasmic) is located at residue D180. The helical transmembrane segment at 181 to 201 (TLFSGFNIFITVALIVVMPFI) threads the bilayer. The Periplasmic segment spans residues 202–244 (TRMMMPKPSDVVSIDPKLLMEEADFQKQLPKDAPPSERLEESR). 2 consecutive transmembrane segments (helical) span residues 245-265 (ILTLIIGALGIAYLAMYFSEH) and 266-286 (GFNITINTVNLMFMIAGLLLH). Over 287 to 313 (KTPMAYMRAISAAARSTAGILVQFPFY) the chain is Periplasmic. Residues 314–334 (AGIQLMMEHSGLGGLITEFFI) form a helical membrane-spanning segment. The Cytoplasmic segment spans residues 335–351 (NVANKDTFPVMTFFSSA). The chain crosses the membrane as a helical span at residues 352 to 372 (LINFAVPSGGGHWVIQGPFVI). The Periplasmic portion of the chain corresponds to 373 to 394 (PAAQALGADLGKSVMAIAYGEQ). Residues 395–415 (WMNMAQPFWALPALAIAGLGV) traverse the membrane as a helical segment. The Cytoplasmic portion of the chain corresponds to 416–419 (RDIM). The chain crosses the membrane as a helical span at residues 420–440 (GYCITALLFSGVIFVIGLTLF).

Its subcellular location is the cell inner membrane. In terms of biological role, may be responsible for the uptake of short-chain fatty acids. This Escherichia coli (strain K12) protein is Putative short-chain fatty acid transporter (atoE).